Consider the following 119-residue polypeptide: Holo-[acyl-carrier-protein] synthase (119 aa).

Mg(2+) contacts are provided by aspartate 8 and glutamate 58.

It belongs to the P-Pant transferase superfamily. AcpS family. Mg(2+) serves as cofactor.

The protein localises to the cytoplasm. It carries out the reaction apo-[ACP] + CoA = holo-[ACP] + adenosine 3',5'-bisphosphate + H(+). Transfers the 4'-phosphopantetheine moiety from coenzyme A to a Ser of acyl-carrier-protein. This Streptococcus mutans serotype c (strain ATCC 700610 / UA159) protein is Holo-[acyl-carrier-protein] synthase.